Consider the following 314-residue polypeptide: Methenyltetrahydromethanopterin cyclohydrolase (314 aa).

This sequence belongs to the MCH family.

It localises to the cytoplasm. It catalyses the reaction 5,10-methenyl-5,6,7,8-tetrahydromethanopterin + H2O = N(5)-formyl-5,6,7,8-tetrahydromethanopterin + H(+). Its pathway is one-carbon metabolism; methanogenesis from CO(2); 5,10-methenyl-5,6,7,8-tetrahydromethanopterin from CO(2): step 3/3. Functionally, catalyzes the reversible interconversion of 5-formyl-H(4)MPT to methenyl-H(4)MPT(+). The protein is Methenyltetrahydromethanopterin cyclohydrolase of Methanoregula boonei (strain DSM 21154 / JCM 14090 / 6A8).